The primary structure comprises 107 residues: MDTSSPSAFVNGALLRRFIGQKVRTVIQVTGSEIGSVVGKSTDDLQIVVRGSSPPSPLTTYLEVIGIAESDNAIRAETWTNFGNTFDTQNYNELCKLANGEFKHLFI.

Met-1 is subject to N-acetylmethionine.

Belongs to the replication factor A protein 3 family. Component of the heterotrimeric canonical replication protein A complex (RPA).

The protein localises to the nucleus. In terms of biological role, as part of the replication protein A (RPA/RP-A), a single-stranded DNA-binding heterotrimeric complex, may play an essential role in DNA replication, recombination and repair. Binds and stabilizes single-stranded DNA intermediates, preventing complementary DNA reannealing and recruiting different proteins involved in DNA metabolism. The polypeptide is Replication protein A 14 kDa subunit A (RPA3A) (Arabidopsis thaliana (Mouse-ear cress)).